Here is a 222-residue protein sequence, read N- to C-terminus: Germin-like protein subfamily 1 member 14 (222 aa).

The N-terminal stretch at 1–22 (MRFSKSLILITLSALVISFAEA) is a signal peptide. An intrachain disulfide couples Cys32 to Cys49. The Cupin type-1 domain occupies 63–214 (SGLNQAGTTN…AFQLDVNVVK (152 aa)). Asn78 is a glycosylation site (N-linked (GlcNAc...) asparagine). Mn(2+)-binding residues include His111, His113, Glu118, and His160.

The protein belongs to the germin family. As to quaternary structure, oligomer (believed to be a pentamer but probably hexamer).

It is found in the secreted. It localises to the extracellular space. Its subcellular location is the apoplast. In terms of biological role, may play a role in plant defense. Probably has no oxalate oxidase activity even if the active site is conserved. The protein is Germin-like protein subfamily 1 member 14 of Arabidopsis thaliana (Mouse-ear cress).